A 361-amino-acid chain; its full sequence is Phosphoserine aminotransferase (361 aa).

Arginine 43 is a binding site for L-glutamate. Residues 77–78 (AS), tryptophan 103, threonine 153, aspartate 173, and glutamine 196 contribute to the pyridoxal 5'-phosphate site. At lysine 197 the chain carries N6-(pyridoxal phosphate)lysine. 238–239 (NT) is a binding site for pyridoxal 5'-phosphate.

This sequence belongs to the class-V pyridoxal-phosphate-dependent aminotransferase family. SerC subfamily. As to quaternary structure, homodimer. Pyridoxal 5'-phosphate serves as cofactor.

It localises to the cytoplasm. The catalysed reaction is O-phospho-L-serine + 2-oxoglutarate = 3-phosphooxypyruvate + L-glutamate. It carries out the reaction 4-(phosphooxy)-L-threonine + 2-oxoglutarate = (R)-3-hydroxy-2-oxo-4-phosphooxybutanoate + L-glutamate. It functions in the pathway amino-acid biosynthesis; L-serine biosynthesis; L-serine from 3-phospho-D-glycerate: step 2/3. Functionally, catalyzes the reversible conversion of 3-phosphohydroxypyruvate to phosphoserine and of 3-hydroxy-2-oxo-4-phosphonooxybutanoate to phosphohydroxythreonine. This Bacillus anthracis (strain A0248) protein is Phosphoserine aminotransferase.